The following is a 306-amino-acid chain: Acetaldehyde dehydrogenase (306 aa).

Position 12–15 (12–15 (SGNI)) interacts with NAD(+). Cysteine 127 serves as the catalytic Acyl-thioester intermediate. NAD(+) is bound by residues 158–166 (SAGPGTRAN) and asparagine 277.

It belongs to the acetaldehyde dehydrogenase family.

It carries out the reaction acetaldehyde + NAD(+) + CoA = acetyl-CoA + NADH + H(+). This Mycolicibacterium gilvum (strain PYR-GCK) (Mycobacterium gilvum (strain PYR-GCK)) protein is Acetaldehyde dehydrogenase.